The primary structure comprises 471 residues: Putative multidrug resistance protein MdtD (471 aa).

The Periplasmic segment spans residues 1 to 11 (MTDLPDSTRWQ). Residues 12 to 32 (LWIVAFGFFMQSLDTTIVNTA) traverse the membrane as a helical segment. At 33–48 (LPSMAQSLGESPLHMH) the chain is on the cytoplasmic side. A helical membrane pass occupies residues 49-69 (MVIVSYVLTVAVMLPASGWLA). At 70 to 76 (DKVGVRN) the chain is on the periplasmic side. A helical membrane pass occupies residues 77 to 97 (IFFTAIVLFTLGSLFCALSGT). Over 98-101 (LNEL) the chain is Cytoplasmic. Residues 102-124 (LLARALQGVGGAMMVPVGRLTVM) traverse the membrane as a helical segment. The Periplasmic portion of the chain corresponds to 125 to 137 (KIVPREQYMAAMT). The chain crosses the membrane as a helical span at residues 138-158 (FVTLPGQIGPLLGPALGGLLV). The Cytoplasmic segment spans residues 159-164 (EYASWH). Residues 165–185 (WIFLINIPVGIIGAIATLMLM) traverse the membrane as a helical segment. Residues 186–196 (PNYTMQTRRFD) are Periplasmic-facing. A helical transmembrane segment spans residues 197–217 (LSGFLLLAVGMAVLTLALDGS). At 218 to 224 (KGTGFSP) the chain is on the cytoplasmic side. A helical membrane pass occupies residues 225 to 245 (LAIAGLVAVGVVALVLYLLHA). Topologically, residues 246-262 (QNNNRALFSLKLFRTRT) are periplasmic. A helical transmembrane segment spans residues 263–283 (FSLGLAGSFAGRIGSGMLPFM). Residues 284 to 285 (TP) are Cytoplasmic-facing. The helical transmembrane segment at 286 to 306 (VFLQIGLGFSPFHAGLMMIPM) threads the bilayer. The Periplasmic segment spans residues 307-341 (VLGSMGMKRIVVQVVNRFGYRWVLVATTLGLSLVT). Residues 342-362 (LLFMTTALLGWYYVLPFVLFL) traverse the membrane as a helical segment. The Cytoplasmic portion of the chain corresponds to 363 to 395 (QGMVNSTRFSSMNTLTLKDLPDNLASSGNSLLS). A helical membrane pass occupies residues 396–416 (MIMQLSMSIGVTIAGLLLGLF). Topologically, residues 417 to 430 (GSQHVSVDSGTTQT) are periplasmic. Residues 431–451 (VFMYTWLSMAFIIALPAFVFA) traverse the membrane as a helical segment. The Cytoplasmic segment spans residues 452 to 471 (RVPSDTHQNVAISRRKRSAQ).

Belongs to the major facilitator superfamily. TCR/Tet family.

It localises to the cell inner membrane. In Escherichia coli O81 (strain ED1a), this protein is Putative multidrug resistance protein MdtD.